Consider the following 452-residue polypeptide: Friend leukemia integration 1 transcription factor (452 aa).

Serine 39 is modified (phosphoserine). Residues 112 to 198 (PPPPNMTTNE…SHLTYLRESS (87 aa)) enclose the PNT domain. The span at 202-214 (YNTTSHTDPSSRL) shows a compositional bias: polar residues. Positions 202–272 (YNTTSHTDPS…YQILGPTSSR (71 aa)) are disordered. The span at 215 to 226 (NVKEDPSYDSVR) shows a compositional bias: basic and acidic residues. The segment covering 248–257 (QTMSKNTEQR) has biased composition (polar residues). The ETS DNA-binding region spans 281–361 (IQLWQFLLEL…HGKRYAYKFD (81 aa)).

This sequence belongs to the ETS family. Can form homodimers or heterodimers with ETV6/TEL1.

It is found in the nucleus. In terms of biological role, sequence-specific transcriptional activator. Recognizes the DNA sequence 5'-C[CA]GGAAGT-3'. In Bos taurus (Bovine), this protein is Friend leukemia integration 1 transcription factor (FLI1).